A 203-amino-acid polypeptide reads, in one-letter code: Guanylate kinase (203 aa).

A Guanylate kinase-like domain is found at 3 to 181 (GTLYIVAAPS…AVSEMCAIFT (179 aa)). 10–17 (APSGAGKS) serves as a coordination point for ATP.

Belongs to the guanylate kinase family.

The protein localises to the cytoplasm. The enzyme catalyses GMP + ATP = GDP + ADP. Functionally, essential for recycling GMP and indirectly, cGMP. The sequence is that of Guanylate kinase from Xanthomonas oryzae pv. oryzae (strain MAFF 311018).